A 684-amino-acid chain; its full sequence is Chaperone protein HtpG (684 aa).

Residues 1 to 329 (MSKKGTIGVT…SPDIPLNVSR (329 aa)) form an a; substrate-binding region. The b stretch occupies residues 330-548 (SYLQSDANVK…FMRRMRDMAQ (219 aa)). Residues 549–684 (LQPGMSFYGE…EFIRRSQRLL (136 aa)) form a c region.

Belongs to the heat shock protein 90 family. Homodimer.

It localises to the cytoplasm. Its function is as follows. Molecular chaperone. Has ATPase activity. The protein is Chaperone protein HtpG of Porphyromonas gingivalis (strain ATCC BAA-308 / W83).